Reading from the N-terminus, the 202-residue chain is MKAGVLALQGDVEEHIQAFRKAAQELGRSVEVVQVKRPQDLREIAVLAIPGGESTTIGALARRTGLLDALRDAIKGGLPTLGTCAGAIFLAKEVRDSVVGETKQPILGLMDIAVVRNAFGRQRESFEVDLREEGIGALKAVFIRAPAFTKAWGSARLAAPLKHPELGQIYAAAFQGHMVATAFHPELSTTAVHRYMLNLAKT.

An L-glutamine-binding site is contributed by 52–54; that stretch reads GES. The Nucleophile role is filled by Cys84. L-glutamine-binding positions include Arg116 and 143–144; that span reads IR. Residues His184 and Glu186 each act as charge relay system in the active site.

The protein belongs to the glutaminase PdxT/SNO family. In the presence of PdxS, forms a dodecamer of heterodimers. Only shows activity in the heterodimer.

It carries out the reaction aldehydo-D-ribose 5-phosphate + D-glyceraldehyde 3-phosphate + L-glutamine = pyridoxal 5'-phosphate + L-glutamate + phosphate + 3 H2O + H(+). It catalyses the reaction L-glutamine + H2O = L-glutamate + NH4(+). It functions in the pathway cofactor biosynthesis; pyridoxal 5'-phosphate biosynthesis. Its function is as follows. Catalyzes the hydrolysis of glutamine to glutamate and ammonia as part of the biosynthesis of pyridoxal 5'-phosphate. The resulting ammonia molecule is channeled to the active site of PdxS. This is Pyridoxal 5'-phosphate synthase subunit PdxT from Pyrobaculum neutrophilum (strain DSM 2338 / JCM 9278 / NBRC 100436 / V24Sta) (Thermoproteus neutrophilus).